The following is a 657-amino-acid chain: Glycogen debranching enzyme (657 aa).

D336 (nucleophile) is an active-site residue. E371 (proton donor) is an active-site residue. Residues A460 to K479 form a disordered region.

This sequence belongs to the glycosyl hydrolase 13 family.

The enzyme catalyses Hydrolysis of (1-&gt;6)-alpha-D-glucosidic linkages to branches with degrees of polymerization of three or four glucose residues in limit dextrin.. It functions in the pathway glycan degradation; glycogen degradation. Functionally, removes maltotriose and maltotetraose chains that are attached by 1,6-alpha-linkage to the limit dextrin main chain, generating a debranched limit dextrin. The chain is Glycogen debranching enzyme from Escherichia coli O6:K15:H31 (strain 536 / UPEC).